The primary structure comprises 70 residues: Large ribosomal subunit protein bL31 (70 aa).

Residue Lys8 is modified to N6-acetyllysine. Zn(2+) contacts are provided by Cys16, Cys18, Cys37, and Cys40.

This sequence belongs to the bacterial ribosomal protein bL31 family. Type A subfamily. As to quaternary structure, part of the 50S ribosomal subunit. It depends on Zn(2+) as a cofactor.

Binds the 23S rRNA. The polypeptide is Large ribosomal subunit protein bL31 (Escherichia coli O6:K15:H31 (strain 536 / UPEC)).